The following is a 289-amino-acid chain: Shikimate dehydrogenase (NADP(+)) (289 aa).

Residues 19-21 (SLS) and T66 contribute to the shikimate site. K70 serves as the catalytic Proton acceptor. Residues N91 and D106 each contribute to the shikimate site. Residues 131–135 (GNGGA) and L229 contribute to the NADP(+) site. Residue Y231 coordinates shikimate. NADP(+) is bound at residue G252.

Belongs to the shikimate dehydrogenase family. Homodimer.

It catalyses the reaction shikimate + NADP(+) = 3-dehydroshikimate + NADPH + H(+). It participates in metabolic intermediate biosynthesis; chorismate biosynthesis; chorismate from D-erythrose 4-phosphate and phosphoenolpyruvate: step 4/7. Its function is as follows. Involved in the biosynthesis of the chorismate, which leads to the biosynthesis of aromatic amino acids. Catalyzes the reversible NADPH linked reduction of 3-dehydroshikimate (DHSA) to yield shikimate (SA). This chain is Shikimate dehydrogenase (NADP(+)), found in Trichormus variabilis (strain ATCC 29413 / PCC 7937) (Anabaena variabilis).